A 160-amino-acid chain; its full sequence is SsrA-binding protein (160 aa).

This sequence belongs to the SmpB family.

It is found in the cytoplasm. Its function is as follows. Required for rescue of stalled ribosomes mediated by trans-translation. Binds to transfer-messenger RNA (tmRNA), required for stable association of tmRNA with ribosomes. tmRNA and SmpB together mimic tRNA shape, replacing the anticodon stem-loop with SmpB. tmRNA is encoded by the ssrA gene; the 2 termini fold to resemble tRNA(Ala) and it encodes a 'tag peptide', a short internal open reading frame. During trans-translation Ala-aminoacylated tmRNA acts like a tRNA, entering the A-site of stalled ribosomes, displacing the stalled mRNA. The ribosome then switches to translate the ORF on the tmRNA; the nascent peptide is terminated with the 'tag peptide' encoded by the tmRNA and targeted for degradation. The ribosome is freed to recommence translation, which seems to be the essential function of trans-translation. In Salmonella arizonae (strain ATCC BAA-731 / CDC346-86 / RSK2980), this protein is SsrA-binding protein.